The following is a 146-amino-acid chain: 3-hydroxyacyl-[acyl-carrier-protein] dehydratase FabZ (146 aa).

Residue His49 is part of the active site.

It belongs to the thioester dehydratase family. FabZ subfamily.

Its subcellular location is the cytoplasm. The catalysed reaction is a (3R)-hydroxyacyl-[ACP] = a (2E)-enoyl-[ACP] + H2O. Its function is as follows. Involved in unsaturated fatty acids biosynthesis. Catalyzes the dehydration of short chain beta-hydroxyacyl-ACPs and long chain saturated and unsaturated beta-hydroxyacyl-ACPs. This is 3-hydroxyacyl-[acyl-carrier-protein] dehydratase FabZ from Pseudomonas syringae pv. tomato (strain ATCC BAA-871 / DC3000).